The following is a 377-amino-acid chain: Guanine nucleotide-binding protein subunit alpha-13 (377 aa).

S-palmitoyl cysteine attachment occurs at residues Cys14 and Cys18. Residues 47–377 enclose the G-alpha domain; sequence RLVKILLLGA…HDNLKQLMLQ (331 aa). The tract at residues 50 to 63 is G1 motif; that stretch reads KILLLGAGESGKST. GTP is bound by residues 58–63, Ser173, and 197–200; these read ESGKST and LLAR. Ser62 lines the Mg(2+) pocket. The G2 motif stretch occupies residues 195–203; the sequence is DILLARRPT. Residue Thr203 coordinates Mg(2+). Position 203 is a phosphothreonine (Thr203). Positions 218 to 227 are G3 motif; sequence FKMVDVGGQR. A G4 motif region spans residues 287–294; that stretch reads ILFLNKTD. GTP contacts are provided by residues 291–294 and Ala349; that span reads NKTD. The tract at residues 347-352 is G5 motif; it reads TTAINT.

The protein belongs to the G-alpha family. G(12) subfamily. G proteins are composed of 3 units; alpha, beta and gamma. The alpha chain contains the guanine nucleotide binding site. Interacts with UBXD5. Interacts with HAX1. Interacts (in GTP-bound form) with PPP5C (via TPR repeats); activates PPP5C phosphatase activity and translocates PPP5C to the cell membrane. Interacts with RGS22. Interacts (in GTP-bound form) with ARHGEF1. Interacts (in GTP-bound form) with ARHGEF11 (via RGS domain). Interacts (in GTP-bound form) with ARHGEF12 (via RGS domain). Interacts with CTNND1. Interacts with GAS2L2. Interacts with GPR35. Interacts with GPR174. Phosphorylation on Thr-203 destabilizes the heterotrimer of alpha, beta and gamma, and inhibits Rho activation. Expressed in brain and testis, as well as in kidney and sperm (at protein level).

It is found in the membrane. The protein localises to the melanosome. It localises to the cytoplasm. Its subcellular location is the nucleus. Its function is as follows. Guanine nucleotide-binding proteins (G proteins) are involved as modulators or transducers in various transmembrane signaling systems. Activates effector molecule RhoA by binding and activating RhoGEFs (ARHGEF1/p115RhoGEF, ARHGEF11/PDZ-RhoGEF and ARHGEF12/LARG). GNA13-dependent Rho signaling subsequently regulates transcription factor AP-1 (activating protein-1). Promotes tumor cell invasion and metastasis by activating Rho/ROCK signaling pathway. Inhibits CDH1-mediated cell adhesion in a process independent from Rho activation. In lymphoid follicles, transmits P2RY8- and S1PR2-dependent signals that lead to inhibition of germinal center (GC) B cell growth and migration outside the GC niche. The protein is Guanine nucleotide-binding protein subunit alpha-13 (Gna13) of Mus musculus (Mouse).